A 369-amino-acid polypeptide reads, in one-letter code: Melanoma-associated antigen 10 (369 aa).

Residues 1–131 (MPRAPKRQRC…VLPDSESLPR (131 aa)) form a disordered region. A compositionally biased stretch (low complexity) spans 39–62 (SSSTSTSSSFPSSFPSSSSSSSSS). Polar residues-rich tracts occupy residues 85–96 (QSAQIACSSPSV) and 107–121 (EGSS…STLQ). The 200-residue stretch at 134 to 333 (IDEKVTDLVQ…RSFPLWYEEA (200 aa)) folds into the MAGE domain. Residues 340-369 (RAQDRIATTDDTTAMASASSSATGSFSYPE) form a disordered region. Over residues 348–369 (TDDTTAMASASSSATGSFSYPE) the composition is skewed to low complexity.

Expressed in many tumors of several types, such as melanoma, head and neck squamous cell carcinoma, lung carcinoma and breast carcinoma, but not in normal tissues except for spermatogonia, spermatocytes and placenta.

The protein localises to the nucleus. Not known, though may play a role in embryonal development and tumor transformation or aspects of tumor progression. In Homo sapiens (Human), this protein is Melanoma-associated antigen 10 (MAGEA10).